The primary structure comprises 779 residues: Pleckstrin homology domain-containing family A member 4 (779 aa).

Positions P54–R153 constitute a PH domain. Disordered stretches follow at residues S152 to P352, A492 to R670, and M691 to D764. S164 is subject to Phosphoserine. The segment covering S184–E193 has biased composition (basic and acidic residues). Residues Q315–Y332 show a composition bias toward polar residues. Residues P525 to S535 show a composition bias toward low complexity. Residues P536 to A551 show a composition bias toward basic and acidic residues. S559 carries the phosphoserine modification. Positions Q594 to E603 are enriched in basic and acidic residues. The span at L647 to L663 shows a compositional bias: polar residues. Pro residues predominate over residues P704–P724.

In terms of tissue distribution, highly expressed in melanoma. Detected at low levels in heart, skeletal muscle, kidney, liver and small intestine.

The protein resides in the cytoplasm. It is found in the membrane. Binds specifically to phosphatidylinositol 3-phosphate (PtdIns3P), but not to other phosphoinositides. This is Pleckstrin homology domain-containing family A member 4 (PLEKHA4) from Homo sapiens (Human).